A 1939-amino-acid polypeptide reads, in one-letter code: Myosin-4 (1939 aa).

The region spanning 33–82 (DAKSSVFVVDAKESYVKATVQSREGGKVTAKTEGGATVTVKEDQVFSMNP) is the Myosin N-terminal SH3-like domain. Serine 36 carries the post-translational modification Phosphoserine. A phosphothreonine mark is found at threonine 64 and threonine 69. Serine 79 carries the post-translational modification Phosphoserine. The Myosin motor domain maps to 86 to 782 (DKIEDMAMMT…LLGTLEEMRD (697 aa)). Position 130 is an N6,N6,N6-trimethyllysine (lysine 130). 179-186 (GESGAGKT) serves as a coordination point for ATP. At tyrosine 389 the chain carries Phosphotyrosine. Residue threonine 391 is modified to Phosphothreonine. Serine 392 carries the phosphoserine modification. Threonine 419 is modified (phosphothreonine). Residue tyrosine 424 is modified to Phosphotyrosine. Serine 625 is modified (phosphoserine). Positions 659–681 (LNKLMTNLKSTHPHFVRCLIPNE) are actin-binding. At histidine 757 the chain carries Pros-methylhistidine. The actin-binding stretch occupies residues 761–775 (KFGHTKVFFKAGLLG). At threonine 776 the chain carries Phosphothreonine. The IQ domain maps to 785–814 (LAQLITRTQAVCRGYLMRVEFRKMMERRES). The stretch at 843–1939 (LLKSAETEKE…EVHTKVISEE (1097 aa)) forms a coiled coil. 2 positions are modified to phosphoserine: serine 1092 and serine 1096. Disordered stretches follow at residues 1128–1147 (AERASRAKAEKQRSDLSREL) and 1153–1172 (RLEEAGGATSAQIEMNKKRE). A phosphoserine mark is found at serine 1162 and serine 1237. Threonine 1241 carries the post-translational modification Phosphothreonine. Serine 1243 carries the post-translational modification Phosphoserine. Threonine 1255 bears the Phosphothreonine mark. Residue serine 1261 is modified to Phosphoserine. Threonine 1265 carries the post-translational modification Phosphothreonine. Position 1278 is a phosphoserine (serine 1278). Threonine 1286 carries the post-translational modification Phosphothreonine. Residues serine 1288, serine 1292, serine 1303, serine 1306, and serine 1413 each carry the phosphoserine modification. Residue tyrosine 1464 is modified to Phosphotyrosine. Threonine 1467 carries the post-translational modification Phosphothreonine. Serine 1474 carries the phosphoserine modification. Tyrosine 1492 is subject to Phosphotyrosine. Serine 1495 carries the phosphoserine modification. Threonine 1501 carries the phosphothreonine modification. Serine 1514 is subject to Phosphoserine. Threonine 1517 is modified (phosphothreonine). 8 positions are modified to phosphoserine: serine 1542, serine 1547, serine 1554, serine 1574, serine 1600, serine 1603, serine 1714, and serine 1726. Residues threonine 1730 and threonine 1736 each carry the phosphothreonine modification. Serine 1739 carries the phosphoserine modification.

This sequence belongs to the TRAFAC class myosin-kinesin ATPase superfamily. Myosin family. As to quaternary structure, muscle myosin is a hexameric protein that consists of 2 heavy chain subunits (MHC), 2 alkali light chain subunits (MLC) and 2 regulatory light chain subunits (MLC-2).

The protein localises to the cytoplasm. Its subcellular location is the myofibril. Muscle contraction. This chain is Myosin-4, found in Rattus norvegicus (Rat).